The chain runs to 257 residues: MKPLVIKLGGVLLDTPAAMENLFTALANYQQNFDRPLVIVHGGGCIVDELMQRLHLPVQKKNGLRVTPSDHIEIITGALAGIANKTLVAQAAKFHLNPVGLCLADGNLTYATQLDPELGHVATVVPKNPALLNNLLGEAFLPIISSIAVDKQGLLMNVNADQAATAIAALIQADLVMLSDVDGVLDANKQRLPELNGAQIEQLIKDNVITDGMVVKVNAALDAAKMLNQGVDIANWKYPEKLTALFAGEIIGTRIKP.

Residues 43 to 44 (GG), Arg65, and Asn157 each bind substrate.

The protein belongs to the acetylglutamate kinase family. ArgB subfamily.

The protein localises to the cytoplasm. It catalyses the reaction N-acetyl-L-glutamate + ATP = N-acetyl-L-glutamyl 5-phosphate + ADP. It participates in amino-acid biosynthesis; L-arginine biosynthesis; N(2)-acetyl-L-ornithine from L-glutamate: step 2/4. Functionally, catalyzes the ATP-dependent phosphorylation of N-acetyl-L-glutamate. This chain is Acetylglutamate kinase, found in Pasteurella multocida (strain Pm70).